The sequence spans 533 residues: Nitrogen fixation protein AnfA (533 aa).

An a domain region spans residues 33 to 193 (ILYKISQIIT…PLVELYLIEN (161 aa)). Residues 46–186 (DLADALSIVL…MIATMIAPLV (141 aa)) enclose the GAF domain. Residues 219–448 (IIGNSKPMQE…LENVMERAVI (230 aa)) form the Sigma-54 factor interaction domain. ATP contacts are provided by residues 247-254 (GESGVGKE) and 310-319 (ADGGTIFLDE). Residues 501-520 (IGEAAKELGLARRMLGVRME) constitute a DNA-binding region (H-T-H motif).

Functionally, anfA is essential for nitrogen fixation under Mo- and V-deficient conditions. It is required for the regulation of nitrogenase 3 transcription. Interacts with sigma-54. The protein is Nitrogen fixation protein AnfA (anfA) of Azotobacter vinelandii.